The primary structure comprises 109 residues: Large ribosomal subunit protein uL22 (109 aa).

Belongs to the universal ribosomal protein uL22 family. In terms of assembly, part of the 50S ribosomal subunit.

This protein binds specifically to 23S rRNA; its binding is stimulated by other ribosomal proteins, e.g. L4, L17, and L20. It is important during the early stages of 50S assembly. It makes multiple contacts with different domains of the 23S rRNA in the assembled 50S subunit and ribosome. Its function is as follows. The globular domain of the protein is located near the polypeptide exit tunnel on the outside of the subunit, while an extended beta-hairpin is found that lines the wall of the exit tunnel in the center of the 70S ribosome. The sequence is that of Large ribosomal subunit protein uL22 from Leptothrix cholodnii (strain ATCC 51168 / LMG 8142 / SP-6) (Leptothrix discophora (strain SP-6)).